The chain runs to 298 residues: ATP synthase gamma chain (298 aa).

It belongs to the ATPase gamma chain family. F-type ATPases have 2 components, CF(1) - the catalytic core - and CF(0) - the membrane proton channel. CF(1) has five subunits: alpha(3), beta(3), gamma(1), delta(1), epsilon(1). CF(0) has three main subunits: a, b and c.

The protein resides in the cell inner membrane. In terms of biological role, produces ATP from ADP in the presence of a proton gradient across the membrane. The gamma chain is believed to be important in regulating ATPase activity and the flow of protons through the CF(0) complex. The chain is ATP synthase gamma chain from Albidiferax ferrireducens (strain ATCC BAA-621 / DSM 15236 / T118) (Rhodoferax ferrireducens).